The chain runs to 310 residues: Alpha/beta hydrolase domain-containing protein 17A (310 aa).

Residues Ser190, Asp255, and His284 each act as charge relay system in the active site. Ser307 carries the phosphoserine modification.

The protein belongs to the AB hydrolase superfamily. ABHD17 family. Post-translationally, palmitoylated on cysteine residues located in a cysteine cluster at the N-terminus which promotes membrane localization. Palmitoylation is required for post-synaptic localization and for depalmitoylating activity towards DLG4/PSD95.

The protein localises to the cell membrane. Its subcellular location is the endosome membrane. It localises to the cell projection. The protein resides in the dendritic spine. It is found in the postsynaptic density membrane. The enzyme catalyses S-hexadecanoyl-L-cysteinyl-[protein] + H2O = L-cysteinyl-[protein] + hexadecanoate + H(+). With respect to regulation, inhibited by palmostatin-B. Functionally, hydrolyzes fatty acids from S-acylated cysteine residues in proteins. Has depalmitoylating activity towards NRAS. Has depalmitoylating activity towards DLG4/PSD95. May have depalmitoylating activity towards MAP6. The protein is Alpha/beta hydrolase domain-containing protein 17A of Homo sapiens (Human).